An 806-amino-acid polypeptide reads, in one-letter code: Glycerol-3-phosphate acyltransferase (806 aa).

Positions 305–310 (CHRSHM) match the HXXXXD motif motif.

It belongs to the GPAT/DAPAT family.

The protein resides in the cell inner membrane. It carries out the reaction sn-glycerol 3-phosphate + an acyl-CoA = a 1-acyl-sn-glycero-3-phosphate + CoA. The protein operates within phospholipid metabolism; CDP-diacylglycerol biosynthesis; CDP-diacylglycerol from sn-glycerol 3-phosphate: step 1/3. This is Glycerol-3-phosphate acyltransferase from Salmonella paratyphi A (strain ATCC 9150 / SARB42).